The chain runs to 74 residues: UPF0248 protein MK0350 (74 aa).

It belongs to the UPF0248 family.

In Methanopyrus kandleri (strain AV19 / DSM 6324 / JCM 9639 / NBRC 100938), this protein is UPF0248 protein MK0350.